The primary structure comprises 260 residues: MAFVPPQAGYDRAITVFSPDGRLFQVNYAREAVKRGATAVGVKCNEGVVLAVEKRITSRLIEPESYEKIFQIDDHIAAASSGIIADARVLVNRARLEAQIHRLTYGEPAPLAVIVKKICDLKQMHTQYGGVRPFGAALLMAGVNEKPELYETDPSGAYFAWKAVAIGSGRNTAMAIFEEKYKDDMSLEEAIKLAIFALAKTMEKPSAENIEVAIITVKDKKFRKLSREEIEKYLNEVMKEVEEEEVKEKEEDYSELDSHY.

A disordered region spans residues 241-260; that stretch reads VEEEEVKEKEEDYSELDSHY.

It belongs to the peptidase T1A family. As to quaternary structure, the 20S proteasome core is composed of 14 alpha and 14 beta subunits that assemble into four stacked heptameric rings, resulting in a barrel-shaped structure. The two inner rings, each composed of seven catalytic beta subunits, are sandwiched by two outer rings, each composed of seven alpha subunits. The catalytic chamber with the active sites is on the inside of the barrel. Has a gated structure, the ends of the cylinder being occluded by the N-termini of the alpha-subunits. Is capped at one or both ends by the proteasome regulatory ATPase, PAN.

It is found in the cytoplasm. With respect to regulation, the formation of the proteasomal ATPase PAN-20S proteasome complex, via the docking of the C-termini of PAN into the intersubunit pockets in the alpha-rings, triggers opening of the gate for substrate entry. Interconversion between the open-gate and close-gate conformations leads to a dynamic regulation of the 20S proteasome proteolysis activity. In terms of biological role, component of the proteasome core, a large protease complex with broad specificity involved in protein degradation. This chain is Proteasome subunit alpha, found in Pyrococcus horikoshii (strain ATCC 700860 / DSM 12428 / JCM 9974 / NBRC 100139 / OT-3).